The primary structure comprises 429 residues: Enolase (429 aa).

Glutamine 163 contacts (2R)-2-phosphoglycerate. Residue glutamate 205 is the Proton donor of the active site. The Mg(2+) site is built by aspartate 242, glutamate 287, and aspartate 314. 4 residues coordinate (2R)-2-phosphoglycerate: lysine 339, arginine 368, serine 369, and lysine 390. Lysine 339 serves as the catalytic Proton acceptor.

This sequence belongs to the enolase family. Mg(2+) serves as cofactor.

The protein resides in the cytoplasm. It localises to the secreted. It is found in the cell surface. It carries out the reaction (2R)-2-phosphoglycerate = phosphoenolpyruvate + H2O. Its pathway is carbohydrate degradation; glycolysis; pyruvate from D-glyceraldehyde 3-phosphate: step 4/5. Its function is as follows. Catalyzes the reversible conversion of 2-phosphoglycerate (2-PG) into phosphoenolpyruvate (PEP). It is essential for the degradation of carbohydrates via glycolysis. This Anaeromyxobacter sp. (strain Fw109-5) protein is Enolase.